An 81-amino-acid polypeptide reads, in one-letter code: Mipartoxin-1A (81 aa).

The signal sequence occupies residues 1 to 21; it reads MKTLLLTLVVVTIVCLDLGNS. Disulfide bonds link Cys24-Cys42, Cys35-Cys61, Cys65-Cys73, and Cys74-Cys79.

Belongs to the three-finger toxin family. Short-chain subfamily. As to expression, expressed by the venom gland.

It localises to the secreted. In terms of biological role, snake venom neurotoxin that blocks neuromuscular transmission, presenting a postsynaptic action through the nicotinic acetylcholine receptor (nAChR). Has no cytotoxic activity. In Micrurus mipartitus (Red-tailed coral snake), this protein is Mipartoxin-1A.